Reading from the N-terminus, the 638-residue chain is Neuroendocrine convertase 2 (638 aa).

The N-terminal stretch at 1 to 25 is a signal peptide; it reads MKGGCVSQWKAAAGFLFCVMVFASA. The propeptide occupies 26-109; it reads ERPVFTNHFL…QQEGFDRKKR (84 aa). Residues 129-453 enclose the Peptidase S8 domain; that stretch reads QWYLINTGQA…YGVLDAGAMV (325 aa). Active-site charge relay system residues include Asp167 and His208. 2 disulfide bridges follow: Cys225–Cys376 and Cys317–Cys347. Asn375 carries an N-linked (GlcNAc...) asparagine glycan. Ser384 serves as the catalytic Charge relay system. In terms of domain architecture, P/Homo B spans 461–597; that stretch reads TVPERFHCVG…TLMLHGTQSA (137 aa). The cysteines at positions 468 and 494 are disulfide-linked. Residues Asn514 and Asn524 are each glycosylated (N-linked (GlcNAc...) asparagine).

The protein belongs to the peptidase S8 family. Furin subfamily.

It is found in the cytoplasmic vesicle. Its subcellular location is the secretory vesicle. It localises to the secreted. It catalyses the reaction Release of protein hormones and neuropeptides from their precursors, generally by hydrolysis of -Lys-Arg-|- bonds.. Its function is as follows. Serine endopeptidase which is involved in the processing of hormone and other protein precursors at sites comprised of pairs of basic amino acid residues. Responsible for the release of glucagon from proglucagon in pancreatic A cells. This chain is Neuroendocrine convertase 2 (PCSK2), found in Homo sapiens (Human).